Consider the following 1018-residue polypeptide: Unconventional myosin-Ig (1018 aa).

At methionine 1 the chain carries N-acetylmethionine. The Myosin motor domain occupies 9–707 (YGKPDFVLLD…TLVTLEQSRA (699 aa)). 102-109 (GESGAGKT) contributes to the ATP binding site. Residues 584-606 (MVALVENLASKEPFYVRCIKPNE) are actin-binding. The IQ domain occupies 710 to 739 (IPIIVLLLQKAWRGTLARWRCRRLRAIYTI). The 194-residue stretch at 824–1017 (GLRQDWGCRR…RGSFTLLWPS (194 aa)) folds into the TH1 domain.

It belongs to the TRAFAC class myosin-kinesin ATPase superfamily. Myosin family. In terms of assembly, interacts with calmodulin; via its IQ motifs. As to expression, specifically expressed in hematopoietic cells.

It localises to the cell membrane. The protein localises to the cell projection. Its subcellular location is the phagocytic cup. Functionally, unconventional myosin required during immune response for detection of rare antigen-presenting cells by regulating T-cell migration. Unconventional myosins are actin-based motor molecules with ATPase activity and serve in intracellular movements. Acts as a regulator of T-cell migration by generating membrane tension, enforcing cell-intrinsic meandering search, thereby enhancing detection of rare antigens during lymph-node surveillance, enabling pathogen eradication. Also required in B-cells, where it regulates different membrane/cytoskeleton-dependent processes. Involved in Fc-gamma receptor (Fc-gamma-R) phagocytosis. In terms of biological role, constitutes the minor histocompatibility antigen HA-2. More generally, minor histocompatibility antigens (mHags) refer to immunogenic peptide which, when complexed with MHC, can generate an immune response after recognition by specific T-cells. The peptides are derived from polymorphic intracellular proteins, which are cleaved by normal pathways of antigen processing. The binding of these peptides to MHC class I or class II molecules and their expression on the cell surface can stimulate T-cell responses and thereby trigger graft rejection or graft-versus-host disease (GVHD) after hematopoietic stem cell transplantation from HLA-identical sibling donor. GVHD is a frequent complication after bone marrow transplantation (BMT), due to mismatch of minor histocompatibility antigen in HLA-matched sibling marrow transplants. HA-2 is restricted to MHC class I HLA-A*0201. This is Unconventional myosin-Ig (MYO1G) from Homo sapiens (Human).